We begin with the raw amino-acid sequence, 762 residues long: Phospholipase D alpha 4 (762 aa).

Positions 1–116 (MELEEQKKYF…VINGFFPLIA (116 aa)) constitute a C2 domain. Asp-172 serves as a coordination point for Ca(2+). The 39-residue stretch at 301-339 (TAFAHHQKTITLDTRVTNSSTKEREIMSFLGGFDLCDGR) folds into the PLD phosphodiesterase 1 domain. Active-site residues include His-306, Lys-308, and Asp-313. His-306 serves as a coordination point for a 1,2-diacyl-sn-glycero-3-phosphate. Ca(2+) is bound by residues His-345 and His-377. Residues Gln-477 and His-615 each coordinate a 1,2-diacyl-sn-glycero-3-phosphate. One can recognise a PLD phosphodiesterase 2 domain in the interval 610-637 (FMVYVHSKLMIVDDTYILIGSANINQRS). Residues His-615, Lys-617, and Asp-622 contribute to the active site. Glu-671 lines the Ca(2+) pocket.

The protein belongs to the phospholipase D family. C2-PLD subfamily. Ca(2+) is required as a cofactor. As to expression, expressed in roots, leaves, stems, siliques,flowers and inflorescences.

The protein resides in the cell membrane. It catalyses the reaction a 1,2-diacyl-sn-glycero-3-phosphocholine + H2O = a 1,2-diacyl-sn-glycero-3-phosphate + choline + H(+). Its function is as follows. Hydrolyzes glycerol-phospholipids at the terminal phosphodiesteric bond to generate phosphatidic acids (PA). Promotes growth and plays a role in nitrogen signaling. This is Phospholipase D alpha 4 from Arabidopsis thaliana (Mouse-ear cress).